A 453-amino-acid chain; its full sequence is Serine/threonine-protein phosphatase 2A 55 kDa regulatory subunit B delta isoform (453 aa).

WD repeat units follow at residues 32-71, 97-138, 181-219, and 230-270; these read AEADIISTVEFNYSGDLLATGDKGGRVVIFQREQENKGRA, EIEE…KRAE, AHTYHINSISVNSDHETYLSADDLRINLWHLEITDRSFN, and ELTE…LCDR. Serine 285 carries the phosphoserine modification. 3 WD repeats span residues 289–327, 344–385, and 420–452; these read EIISSISDVKFSHSGRYMMTRDYLSVKVWDLNMEGRPVE, ENDC…DVTL, and DFNKKILHTAWHPMESIIAVAATNNLYIFQDKI. The residue at position 305 (tyrosine 305) is a Phosphotyrosine. The residue at position 308 (threonine 308) is a Phosphothreonine.

The protein belongs to the phosphatase 2A regulatory subunit B family. PP2A consists of a common heterodimeric core enzyme, composed of a 36 kDa catalytic subunit (subunit C) and a 65 kDa constant regulatory subunit (PR65 or subunit A), that associates with a variety of regulatory subunits. Proteins that associate with the core dimer include three families of regulatory subunits B (the R2/B/PR55/B55, R3/B''/PR72/PR130/PR59 and R5/B'/B56 families), the 48 kDa variable regulatory subunit, viral proteins, and cell signaling molecules. Interacts with IER5.

It is found in the cytoplasm. Its function is as follows. Substrate-recognition subunit of protein phosphatase 2A (PP2A) that plays a key role in cell cycle by controlling mitosis entry and exit. Involved in chromosome clustering during late mitosis by mediating dephosphorylation of MKI67. The activity of PP2A complexes containing PPP2R2D (PR55-delta) fluctuate during the cell cycle: the activity is high in interphase and low in mitosis. This is Serine/threonine-protein phosphatase 2A 55 kDa regulatory subunit B delta isoform from Mus musculus (Mouse).